The following is a 421-amino-acid chain: MMIKVKKETMRACLSCSICDNILRDATTISECLHTFCRKCIYEKITEDEIETCPVCNIDLGSTPLEKLRPDHNLQDLRAKIFALKRRKVKAPGIVSLPGKRKERSISSLVVSTPMVSAQAGTTRRRTKAPTRKELRNGSLAERTVKKEESSGDELLESTSSPDTLNKFTQNKRQSKKSCKESISNKENKDGDEPWDSKMDWKPLNFLVEVANGTKPLKSSASQGSGSKSEHANVSRNQFQGSKTKTKNKKRKCKREDDKSNNGDPTTSETVTPKRMRTTQRKRSATTLGDSRNLPQPDESSAKQERRNGPVWFSLVASNDQEGGTSLPQIPANFLRIRDGNTTVSFIQKYLMRKLDLESENEIEIKCMGEAVIPTLTLYNLVDLWLQKSSNHQRFAALVGSSAKDFTMVLVYARKLPECNM.

The RING-type zinc finger occupies 16 to 57; that stretch reads CSICDNILRDATTISECLHTFCRKCIYEKITEDEIETCPVCN. Composition is skewed to polar residues over residues 106 to 121 and 157 to 172; these read ISSL…AQAG and ESTS…TQNK. 2 disordered regions span residues 106–198 and 216–307; these read ISSL…WDSK and PLKS…QERR. Residues 178–198 are compositionally biased toward basic and acidic residues; it reads SCKESISNKENKDGDEPWDSK. Residues 218–227 are compositionally biased toward low complexity; that stretch reads KSSASQGSGS. Positions 244–253 are enriched in basic residues; the sequence is TKTKNKKRKC. The segment covering 262-271 has biased composition (polar residues); that stretch reads NGDPTTSETV. Over residues 274 to 284 the composition is skewed to basic residues; the sequence is KRMRTTQRKRS. Polar residues predominate over residues 285-294; sequence ATTLGDSRNL.

In terms of assembly, interacts with DREB2A. Autoubiquitinated. As to expression, expressed in roots, leaves and flowers.

Its subcellular location is the nucleus. The enzyme catalyses S-ubiquitinyl-[E2 ubiquitin-conjugating enzyme]-L-cysteine + [acceptor protein]-L-lysine = [E2 ubiquitin-conjugating enzyme]-L-cysteine + N(6)-ubiquitinyl-[acceptor protein]-L-lysine.. Its pathway is protein modification; protein ubiquitination. In terms of biological role, E3 ubiquitin-protein ligase that acts as a negative regulator of the response to water stress. Mediates ubiquitination and subsequent proteasomal degradation of the drought-induced transcriptional activator DREB2A. Functionally redundant with DRIP2. In Arabidopsis thaliana (Mouse-ear cress), this protein is E3 ubiquitin protein ligase DRIP1 (DRIP1).